We begin with the raw amino-acid sequence, 128 residues long: Large ribosomal subunit protein bL17 (128 aa).

It belongs to the bacterial ribosomal protein bL17 family. As to quaternary structure, part of the 50S ribosomal subunit. Contacts protein L32.

The sequence is that of Large ribosomal subunit protein bL17 from Streptococcus agalactiae serotype Ia (strain ATCC 27591 / A909 / CDC SS700).